A 311-amino-acid polypeptide reads, in one-letter code: tRNA-cytidine(32) 2-sulfurtransferase (311 aa).

The PP-loop motif motif lies at 47–52 (SGGKDS). [4Fe-4S] cluster-binding residues include Cys122, Cys125, and Cys213.

The protein belongs to the TtcA family. In terms of assembly, homodimer. It depends on Mg(2+) as a cofactor. [4Fe-4S] cluster is required as a cofactor.

Its subcellular location is the cytoplasm. It catalyses the reaction cytidine(32) in tRNA + S-sulfanyl-L-cysteinyl-[cysteine desulfurase] + AH2 + ATP = 2-thiocytidine(32) in tRNA + L-cysteinyl-[cysteine desulfurase] + A + AMP + diphosphate + H(+). The protein operates within tRNA modification. In terms of biological role, catalyzes the ATP-dependent 2-thiolation of cytidine in position 32 of tRNA, to form 2-thiocytidine (s(2)C32). The sulfur atoms are provided by the cysteine/cysteine desulfurase (IscS) system. The chain is tRNA-cytidine(32) 2-sulfurtransferase from Pectobacterium atrosepticum (strain SCRI 1043 / ATCC BAA-672) (Erwinia carotovora subsp. atroseptica).